The following is an 863-amino-acid chain: Chloride channel protein A (863 aa).

Residues 1–124 are Cytoplasmic-facing; that stretch reads MFRNNNNDNN…TSKLNHMLKT (124 aa). Residues 48-78 are disordered; sequence ENGLINNNNNSHNNNNGGNNNNHGPSKVTHR. Residues 49-71 are compositionally biased toward low complexity; that stretch reads NGLINNNNNSHNNNNGGNNNNHG. The next 7 helical transmembrane spans lie at 125–145, 171–191, 228–248, 289–309, 324–344, 367–387, and 408–428; these read FGKW…AYLV, IAFL…SLVI, LVSL…GPMI, GAAA…LFGF, TFFA…GFDM, LIPF…FVNL, and VLEV…CAAF. The interval 434 to 460 is disordered; sequence KTQANGSQTNSLDTSSSSILSSSGDNS. Low complexity predominate over residues 439 to 460; that stretch reads GSQTNSLDTSSSSILSSSGDNS. 3 helical membrane passes run 518–538, 539–559, and 561–581; these read IFTI…TTIT, SGLM…ATFG, and LVGQ…ALVG. 2 CBS domains span residues 661-742 and 816-863; these read MKTE…CHEQ and MNLS…KDLL.

This sequence belongs to the chloride channel (TC 2.A.49) family.

Its subcellular location is the membrane. Its function is as follows. Voltage-gated chloride channel. Chloride channels may have several functions including the regulation of cell volume, membrane potential stabilization and signal transduction. This is Chloride channel protein A (clcA) from Dictyostelium discoideum (Social amoeba).